Consider the following 379-residue polypeptide: Transcription termination factor 1b, mitochondrial (379 aa).

A mitochondrion-targeting transit peptide spans 1-37 (MASRNIWCVRRNFLFDLRGWMLQYSAEVFLKSISFRT). Interaction with DNA stretches follow at residues 151–152 (RS), 229–233 (QSTKR), 306–313 (SEKKFNDK), 337–340 (SINT), and 366–373 (SQRRYEAK).

The protein belongs to the mTERF family. Monomer. In terms of processing, phosphoprotein with mostly four phosphate groups. While the DNA-binding activity is unaffected by the phosphorylation state, only the phosphorylated form of the protein is active for termination activity. Functioning seems to be regulated by phosphorylation. In terms of tissue distribution, expressed strongly in the heart and at lower levels in brain, liver and kidney.

The protein resides in the mitochondrion. Functionally, transcription termination factor. Binds to a 28 bp region within the tRNA(Leu(uur)) gene at a position immediately adjacent to and downstream of the 16S rRNA gene; this region comprises a tridecamer sequence critical for directing accurate termination. Binds DNA along the major grove and promotes DNA bending and partial unwinding. Promotes base flipping. Transcription termination activity appears to be polarized with highest specificity for transcripts initiated on the light strand. The sequence is that of Transcription termination factor 1b, mitochondrial from Mus musculus (Mouse).